The sequence spans 1943 residues: Cadherin-86C (1943 aa).

The disordered stretch occupies residues 1 to 102; that stretch reads MASTSSSQPE…QNQQMQHHWP (102 aa). Topologically, residues 1 to 934 are extracellular; that stretch reads MASTSSSQPE…TDTQYKAENK (934 aa). A glycan (N-linked (GlcNAc...) asparagine) is linked at N12. A compositionally biased stretch (basic residues) spans 50-89; that stretch reads PHHHHHHHHQHHHHHRLKQHHRHHHHHHRLQHHHHHHQQQ. A compositionally biased stretch (low complexity) spans 90 to 100; sequence HNHQNQQMQHH. Cadherin domains lie at 238–366, 367–483, 484–600, 601–708, and 709–832; these read CSIT…PPVF, TSAP…PPYF, ENDH…APVF, EQPA…TPIF, and DKDL…SVKF. Residues N244, N419, N531, N579, N585, N612, and N645 are each glycosylated (N-linked (GlcNAc...) asparagine). N-linked (GlcNAc...) asparagine glycosylation is present at N912. A helical membrane pass occupies residues 935 to 955; the sequence is VLFWLLILLATLVALTILILL. Topologically, residues 956-1943 are cytoplasmic; that stretch reads LCCICSWCPL…NSGGESPQYS (988 aa). Disordered regions lie at residues 1038-1058, 1390-1442, 1458-1516, 1546-1695, and 1707-1895; these read DVGRGQDIGEGDRRHIQSAEE, KPSR…RKRI, EEEE…SHNR, YKHS…ERNV, and KSSV…DDHD. Basic and acidic residues predominate over residues 1047–1058; the sequence is EGDRRHIQSAEE. Over residues 1426 to 1442 the composition is skewed to basic residues; it reads IKRRRTKKRPRQPRKRI. Basic and acidic residues-rich tracts occupy residues 1486 to 1497 and 1507 to 1516; these read QLSDESRKDQSR and HRSESDSHNR. Positions 1552–1568 are enriched in acidic residues; the sequence is DFDEDDTEYSIDSDGDE. Basic and acidic residues predominate over residues 1580–1602; it reads QENERYRRQERTYAEPENPVDRK. The span at 1633–1667 shows a compositional bias: polar residues; the sequence is KQTSSEPPHNRVSISKYESTVTENGRKLMSTSTEI. A compositionally biased stretch (low complexity) spans 1709–1724; it reads SVSGRTSTESSKSQPS. 4 stretches are compositionally biased toward basic and acidic residues: residues 1754–1764, 1774–1793, 1800–1810, and 1837–1863; these read TGGRYKPEPAP, LLKEDRALNKQHKPKIETDT, HSEHRFERENA, and KESKSGRESKTSKEAKPKPSPIRENEV. Residues 1879–1889 are compositionally biased toward polar residues; that stretch reads HPTQKQLNAST.

As cell intercalation proceeds, a row of stigmatophore cells surrounding the spiracular chamber show expression of Cad86C. Expression is regulated by the Abd-B cascade, requiring sal. Expressed in a broad region of the morphogenetic furrow and in clusters of cells posterior to the morphogenetic furrow. Weakly expressed in the epithelium of wing imaginal disks. In eye imaginal disk cells within the morphogenetic furrow, expression is localized to the apical region.

The protein localises to the cell membrane. In terms of biological role, cadherins are calcium-dependent cell adhesion proteins. They preferentially interact with themselves in a homophilic manner in connecting cells. The polypeptide is Cadherin-86C (Cad86C) (Drosophila melanogaster (Fruit fly)).